A 313-amino-acid polypeptide reads, in one-letter code: MRTLYPEVTPFEHGILCVDDNHRLYYEQCGNPHGKPVVILHGGPGSGCNDKMRRFHDPDKYRIVLFDQRGAGRSTPHANLTNNTTWDLVADIEKLRVALGITRWQVFGGSWGSTLALAYAQTHPEQTTELVLRGIFMLRRWELEWFYQEGASHLFPDAWDRYIAVIPPVERHDLISAFHRRLTSEDEATRLAAAQAWSLWEGATSCLYMDQDFIASHENPHFALAFARIENHYFVNGGFFEVENQLLRDAQRIANIPGVIVHGRYDVVCPLQNAWDLHKVWPKASLKITPGAGHSAFEPQNIDALVCATDSFV.

The region spanning Lys35–Glu298 is the AB hydrolase-1 domain. Residue Ser110 is the Nucleophile of the active site. Residue Asp266 is part of the active site. His294 acts as the Proton donor in catalysis.

This sequence belongs to the peptidase S33 family.

Its subcellular location is the cytoplasm. The enzyme catalyses Release of N-terminal proline from a peptide.. Specifically catalyzes the removal of N-terminal proline residues from peptides. The protein is Proline iminopeptidase (pip) of Xylella fastidiosa (strain 9a5c).